The chain runs to 98 residues: Citrate lyase acyl carrier protein (98 aa).

Ser-14 is modified (O-(phosphoribosyl dephospho-coenzyme A)serine).

The protein belongs to the CitD family. In terms of assembly, oligomer with a subunit composition of (alpha,beta,gamma)6.

The protein resides in the cytoplasm. Functionally, covalent carrier of the coenzyme of citrate lyase. This chain is Citrate lyase acyl carrier protein, found in Escherichia coli O81 (strain ED1a).